Here is a 110-residue protein sequence, read N- to C-terminus: Cation efflux system protein CusF (110 aa).

The signal sequence occupies residues 1-21 (MKKALQVAMFSLFTVIGFNAQ).

In terms of assembly, the cus efflux system is composed of CusA, CusB, CusC and CusF. Interacts with copper-exporting P-type ATPase CopA; when this protein is precharged with copper it binds very little CopA.

It localises to the periplasm. Part of a cation efflux system that mediates resistance to copper and silver. Binds one copper per polypeptide. The protein is Cation efflux system protein CusF (cusF) of Escherichia coli (strain K12).